The sequence spans 723 residues: Polyribonucleotide nucleotidyltransferase (723 aa).

Residues Asp-488 and Asp-494 each coordinate Mg(2+). Residues 555–614 enclose the KH domain; sequence PRMITMKIHPDKIREVIGKGGSTIQALTKETGTTIDIQEDGTITIASTSTDGMAEAKRRI. The S1 motif domain occupies 624 to 692; that stretch reads GKIYAGTVLK…EKGRLRLSLK (69 aa). The segment at 701–723 is disordered; sequence SISPINAGEAAAPAAPAEGSEQQ. The span at 707-723 shows a compositional bias: low complexity; sequence AGEAAAPAAPAEGSEQQ.

This sequence belongs to the polyribonucleotide nucleotidyltransferase family. It depends on Mg(2+) as a cofactor.

The protein localises to the cytoplasm. The catalysed reaction is RNA(n+1) + phosphate = RNA(n) + a ribonucleoside 5'-diphosphate. Functionally, involved in mRNA degradation. Catalyzes the phosphorolysis of single-stranded polyribonucleotides processively in the 3'- to 5'-direction. The chain is Polyribonucleotide nucleotidyltransferase from Cupriavidus necator (strain ATCC 17699 / DSM 428 / KCTC 22496 / NCIMB 10442 / H16 / Stanier 337) (Ralstonia eutropha).